Reading from the N-terminus, the 348-residue chain is S-adenosylmethionine:tRNA ribosyltransferase-isomerase (348 aa).

It belongs to the QueA family. Monomer.

The protein resides in the cytoplasm. The enzyme catalyses 7-aminomethyl-7-carbaguanosine(34) in tRNA + S-adenosyl-L-methionine = epoxyqueuosine(34) in tRNA + adenine + L-methionine + 2 H(+). It functions in the pathway tRNA modification; tRNA-queuosine biosynthesis. In terms of biological role, transfers and isomerizes the ribose moiety from AdoMet to the 7-aminomethyl group of 7-deazaguanine (preQ1-tRNA) to give epoxyqueuosine (oQ-tRNA). This Amoebophilus asiaticus (strain 5a2) protein is S-adenosylmethionine:tRNA ribosyltransferase-isomerase.